Here is a 146-residue protein sequence, read N- to C-terminus: Large ribosomal subunit protein uL15 (146 aa).

Residues 1 to 13 (MKLHELKPAEGSR) are compositionally biased toward basic and acidic residues. The interval 1–57 (MKLHELKPAEGSRKVRNRVGRGTSSGNGKTSGRGQKGQKARSGVGLRPGFEGGQTPL) is disordered. Residues 23–35 (TSSGNGKTSGRGQ) are compositionally biased toward gly residues.

It belongs to the universal ribosomal protein uL15 family. In terms of assembly, part of the 50S ribosomal subunit.

Its function is as follows. Binds to the 23S rRNA. The polypeptide is Large ribosomal subunit protein uL15 (Streptococcus thermophilus (strain CNRZ 1066)).